The following is a 418-amino-acid chain: Putative ion-transport protein YfeO (418 aa).

A run of 12 helical transmembrane segments spans residues L10 to V30, D54 to I74, A99 to P119, E120 to P140, I149 to I169, L186 to P206, I223 to C243, V258 to V278, D300 to F320, G322 to H342, V343 to V363, and L386 to V406.

Belongs to the chloride channel (TC 2.A.49) family.

The protein localises to the cell membrane. This Escherichia fergusonii (strain ATCC 35469 / DSM 13698 / CCUG 18766 / IAM 14443 / JCM 21226 / LMG 7866 / NBRC 102419 / NCTC 12128 / CDC 0568-73) protein is Putative ion-transport protein YfeO.